Consider the following 454-residue polypeptide: Histidine--tRNA ligase (454 aa).

This sequence belongs to the class-II aminoacyl-tRNA synthetase family. In terms of assembly, homodimer.

Its subcellular location is the cytoplasm. It catalyses the reaction tRNA(His) + L-histidine + ATP = L-histidyl-tRNA(His) + AMP + diphosphate + H(+). This chain is Histidine--tRNA ligase, found in Phocaeicola vulgatus (strain ATCC 8482 / DSM 1447 / JCM 5826 / CCUG 4940 / NBRC 14291 / NCTC 11154) (Bacteroides vulgatus).